The sequence spans 173 residues: Phosphopantetheine adenylyltransferase (173 aa).

A substrate-binding site is contributed by Ser9. ATP is bound by residues 9-10 (SF) and His17. Lys41, Thr73, and Arg87 together coordinate substrate. ATP is bound by residues 88 to 90 (GVR), Glu98, and 123 to 129 (YQYLSSS).

Belongs to the bacterial CoaD family. In terms of assembly, homohexamer. The cofactor is Mg(2+).

Its subcellular location is the cytoplasm. It catalyses the reaction (R)-4'-phosphopantetheine + ATP + H(+) = 3'-dephospho-CoA + diphosphate. The protein operates within cofactor biosynthesis; coenzyme A biosynthesis; CoA from (R)-pantothenate: step 4/5. Its function is as follows. Reversibly transfers an adenylyl group from ATP to 4'-phosphopantetheine, yielding dephospho-CoA (dPCoA) and pyrophosphate. In Limosilactobacillus fermentum (strain NBRC 3956 / LMG 18251) (Lactobacillus fermentum), this protein is Phosphopantetheine adenylyltransferase.